The chain runs to 595 residues: Probable inactive glycosyltransferase 25 family member 3 (595 aa).

Positions 1–24 (MRAAPAAPLLQLLLLLGPRPEAAG) are cleaved as a signal peptide. Asparagine 75, asparagine 153, asparagine 237, and asparagine 360 each carry an N-linked (GlcNAc...) asparagine glycan. The tract at residues 576-595 (RLDLAGGSGHSLRPHPRDEL) is disordered. The Prevents secretion from ER motif lies at 592 to 595 (RDEL).

This sequence belongs to the glycosyltransferase 25 family.

It is found in the endoplasmic reticulum lumen. Probable cell adhesion protein involved in leukocyte transmigration across the blood-brain barrier. Does not express any beta-galactosyltransferase activity in vitro. The sequence is that of Probable inactive glycosyltransferase 25 family member 3 (CERCAM) from Bos taurus (Bovine).